The sequence spans 318 residues: L-malyl-CoA/beta-methylmalyl-CoA lyase (318 aa).

Residues Phe-19, Arg-24, Lys-30, and Arg-76 each coordinate substrate. Positions 141 and 168 each coordinate Mg(2+). Residues 167 to 168 (AD) and 251 to 252 (IH) each bind substrate.

This sequence belongs to the HpcH/HpaI aldolase family. In terms of assembly, homohexamer. Dimer of trimers. It depends on Mg(2+) as a cofactor. Requires Mn(2+) as cofactor.

It catalyses the reaction (S)-malyl-CoA = glyoxylate + acetyl-CoA. The enzyme catalyses (2R,3S)-beta-methylmalyl-CoA = propanoyl-CoA + glyoxylate. In terms of biological role, involved in the ethylmalonyl-CoA pathway for acetate assimilation. Catalyzes the reversible condensation of glyoxylate and acetyl-CoA to L-malyl-CoA and the reversible condensation of glyoxylate and propionyl-CoA to yield beta-methylmalyl-CoA. The sequence is that of L-malyl-CoA/beta-methylmalyl-CoA lyase from Cereibacter sphaeroides (strain ATCC 17029 / ATH 2.4.9) (Rhodobacter sphaeroides).